A 944-amino-acid chain; its full sequence is MSKVDFLHIKGARENNLKNVELTIPKNKLVIFTGLSGSGKSSLAFNTIYEEGRRRYVDSLSSYARQFLGGTSKPDVDSIEGLSPAISIEQKTTHNNPRSTVGTVTEIYDYLRLLYARIGKPFCPKHKIKIEGKTTKLIIEGIVDFPKNSKLIILSPVVELEKGTHQKLIAKLKTEGFLRLKINNEIVSLSDDKEINLDKNKRHSIDIVVDRIVLNEEKKLEISEAISIALEYGKGIVKVENVETGEIKIFSSNHSCPKGDFEMPKIETRLFSFNSPYGMCQNCKGLGVQLRGDYNLLVPDQNLSISEGAIKIFESTVNSSNQEWQEFEALLNYYGIDKNIPMRKLSESDRQIIKYGSKEEIDYIIKSQSNKFKRTKRIEGIIDKVERKYLETSSEGIRTWIKRYMSEFICNMCKGSRLNEHALAVKINGLNIWEISSLSINDVYEQSINLNLSDYEREITTLLISELTSRLSFLVDVGLDYLTLNRMAESLSGGEAQRIRLATQIGSNLTGVLYVLDEPSIGLHQKDNERLIKTLRKMVEIGNTLIVVEHDEDTMRASDFIVDIGPKAGSHGGEIVALGSVEDIIKNPISITGKYLSGEWQNATPKSRRSGSGNVIKITGASQNNIKKLDFKIPLGKFIGVTGVSGSGKSTLINQVLVNAIEKGIARDFSHDKNKNYEKIEGLLYIDKLIKISQSPIGRTPRSNPATYSSLFDDIREIFSNVPEAKARGYQKGRFSFNVPGGRCEKCSGDGSIKIEMFFLPNVYITCDHCDGKRYNEETLQIKYRSKSISDVLDMTVSDALAFFENRLIVKNKLQTLEDVGLGYIKLGQSSTTLSGGEAQRVKLASHLLKKSTGKTLYVLDEPTTGLHSHDVSLLLKVLNRLVDKGDTVIVIEHNLDVIKNCDYLIDLGPGGGVNGGKIIATGTPEQVAQIEKSYTGEFLKRVL.

In terms of domain architecture, ABC transporter 1 spans 1–242 (MSKVDFLHIK…GKGIVKVENV (242 aa)). 34 to 41 (GLSGSGKS) serves as a coordination point for ATP. The segment at 256–283 (CPKGDFEMPKIETRLFSFNSPYGMCQNC) adopts a C4-type; degenerate zinc-finger fold. ABC transporter domains follow at residues 359–597 (EEID…KYLS) and 610–935 (SGSG…EKSY). 643–650 (GVSGSGKS) contacts ATP. The segment at 744–770 (CEKCSGDGSIKIEMFFLPNVYITCDHC) adopts a C4-type zinc-finger fold.

This sequence belongs to the ABC transporter superfamily. UvrA family. In terms of assembly, forms a heterotetramer with UvrB during the search for lesions.

The protein localises to the cytoplasm. Functionally, the UvrABC repair system catalyzes the recognition and processing of DNA lesions. UvrA is an ATPase and a DNA-binding protein. A damage recognition complex composed of 2 UvrA and 2 UvrB subunits scans DNA for abnormalities. When the presence of a lesion has been verified by UvrB, the UvrA molecules dissociate. The polypeptide is UvrABC system protein A (Mycoplasmopsis pulmonis (strain UAB CTIP) (Mycoplasma pulmonis)).